Here is a 249-residue protein sequence, read N- to C-terminus: ATP synthase subunit a (249 aa).

6 helical membrane passes run 26–46, 84–104, 114–134, 143–163, 185–205, and 208–228; these read FTNS…FLYL, FFPF…LGLF, IVVT…YGFW, LFVP…IEVI, ITLK…VAGA, and AVLP…VAFL.

This sequence belongs to the ATPase A chain family. F-type ATPases have 2 components, CF(1) - the catalytic core - and CF(0) - the membrane proton channel. CF(1) has five subunits: alpha(3), beta(3), gamma(1), delta(1), epsilon(1). CF(0) has three main subunits: a(1), b(2) and c(9-12). The alpha and beta chains form an alternating ring which encloses part of the gamma chain. CF(1) is attached to CF(0) by a central stalk formed by the gamma and epsilon chains, while a peripheral stalk is formed by the delta and b chains.

Its subcellular location is the cell inner membrane. In terms of biological role, key component of the proton channel; it plays a direct role in the translocation of protons across the membrane. In Chelativorans sp. (strain BNC1), this protein is ATP synthase subunit a.